A 351-amino-acid chain; its full sequence is sn-1 oleoyl-lipid 12-desaturase (351 aa).

The next 2 membrane-spanning stretches (helical) occupy residues 46-66 (WASVLITLGAIAVGYLGIIYL) and 68-88 (WYCLPITWIWTGTALTGAFVV). Positions 90–94 (HDCGH) match the Histidine box-1 motif. Residues 102-122 (WVNDLVGHIAFAPLIYPFHSW) traverse the membrane as a helical segment. A Histidine box-2 motif is present at residues 126–130 (HDHHH). The next 2 helical transmembrane spans lie at 199-219 (IAVVFLFAAIAFPALIITTGV) and 222-242 (FVKFWLMPWLVYHFWMSTFTI). The Histidine box-3 signature appears at 290 to 294 (HHLSV).

This sequence belongs to the fatty acid desaturase type 2 family. Requires Fe(2+) as cofactor.

The protein resides in the membrane. It carries out the reaction a 1-[(9Z)-octadecenoyl]-2-acyl-glycerolipid + 2 reduced [2Fe-2S]-[ferredoxin] + O2 + 2 H(+) = a 1-[(9Z,12Z)-octadecdienoyl]-2-acyl-glycerolipid + 2 oxidized [2Fe-2S]-[ferredoxin] + 2 H2O. Its pathway is lipid metabolism; polyunsaturated fatty acid biosynthesis. Its function is as follows. Desaturase involved in fatty acid biosynthesis. Introduces a double bond at carbon 12 of oleoyl groups (18:1) attached to the sn-1 position of the glycerol moiety of membrane glycerolipids. This enzyme is involved in chilling tolerance because the phase transition temperature of lipids of cellular membranes depends on the degree of unsaturation of fatty acids of the membrane lipids. This is sn-1 oleoyl-lipid 12-desaturase from Synechocystis sp. (strain ATCC 27184 / PCC 6803 / Kazusa).